The sequence spans 499 residues: MNFFIKSCFLDKEKTDCIVVSVFELSELSDSAIYLDKCSNGHITSLIKLGDIQGKIGDTLMLYKVPKILSKRILLVGCGKKDEINIIRFKKILKNTIHAIKKKSITNIVYSFSNINIDNIYWMIRRMVLSLKESLYETIKINNINIKNTNIHSITLNIIKKNDLFIAKTALKHALAIDHAITSTKNLSNLPPNICNPLYLSYKAQELSKKYENNIVVEIIDIKKMKELGMNAYIAVGNGSKNKPFMSVIKYSGNNIVNKKIIAFVGKGLTFDSGGISIKPALHMHEMKYDMCGAAAVYGTLIMAAELQLPLTVIGILSGCENMVGSHSFRPGDVLTTMSGQTVEILNTDAEGRLVLCDSLTYLERFSPDIVIDVATLTGACVTALGESVSGLFSNNEELSNQLLHASQETDDKIWSLPLFSEYHKELNSDIADFSNIGRGKAGAITAACFLSKFTKKYNWAHLDIAGTAWKSGKKSGATGRPVELLCQFLLNQSNYIYN.

Mn(2+) contacts are provided by Lys267 and Asp272. Lys279 is an active-site residue. Positions 290, 349, and 351 each coordinate Mn(2+). The active site involves Arg353.

The protein belongs to the peptidase M17 family. Requires Mn(2+) as cofactor.

It is found in the cytoplasm. The catalysed reaction is Release of an N-terminal amino acid, Xaa-|-Yaa-, in which Xaa is preferably Leu, but may be other amino acids including Pro although not Arg or Lys, and Yaa may be Pro. Amino acid amides and methyl esters are also readily hydrolyzed, but rates on arylamides are exceedingly low.. The enzyme catalyses Release of an N-terminal amino acid, preferentially leucine, but not glutamic or aspartic acids.. In terms of biological role, presumably involved in the processing and regular turnover of intracellular proteins. Catalyzes the removal of unsubstituted N-terminal amino acids from various peptides. The sequence is that of Cytosol aminopeptidase (pepA) from Buchnera aphidicola subsp. Acyrthosiphon pisum (strain APS) (Acyrthosiphon pisum symbiotic bacterium).